The sequence spans 277 residues: Large ribosomal subunit protein uL2 (277 aa).

Disordered stretches follow at residues 1-20 and 210-277; these read MAVK…TTAD and GRSR…RGGK. Residues 210–221 show a composition bias toward basic residues; sequence GRSRWLGRKPHQ.

This sequence belongs to the universal ribosomal protein uL2 family. As to quaternary structure, part of the 50S ribosomal subunit. Forms a bridge to the 30S subunit in the 70S ribosome.

One of the primary rRNA binding proteins. Required for association of the 30S and 50S subunits to form the 70S ribosome, for tRNA binding and peptide bond formation. It has been suggested to have peptidyltransferase activity; this is somewhat controversial. Makes several contacts with the 16S rRNA in the 70S ribosome. In Deinococcus deserti (strain DSM 17065 / CIP 109153 / LMG 22923 / VCD115), this protein is Large ribosomal subunit protein uL2.